The sequence spans 300 residues: MGTEGKAGSKLLFLFTSMILGSLVQGKGSVYSPQTAVQVPENDSVKLPCIYSGFSSPRVEWKFVQGSTTALVCYNNQITVPYADRVTFSSSGITFSSVTRKDNGEYTCMVSEDGGQNYGEVSIHLTVLVPPSKPTVSIPSSVTIGNRAVLTCSEHDGSPPSEYSWFKDGVPMLTADAKKTRAFINSSYTIDPKSGDLVFDPVSAFDSGEYYCEAQNGYGTAMRSEAVRMEAVELNVGGIVAAVLVTLILLGLLIFGIWFAYSRGYFERTKKGTAPGKKVIYSQPSARSEGEFKQTSSFLV.

An N-terminal signal peptide occupies residues 1–26 (MGTEGKAGSKLLFLFTSMILGSLVQG). At 27–238 (KGSVYSPQTA…MEAVELNVGG (212 aa)) the chain is on the extracellular side. Ig-like V-type domains are found at residues 28–122 (GSVY…GEVS) and 134–228 (PTVS…EAVR). 2 cysteine pairs are disulfide-bonded: cysteine 49-cysteine 108 and cysteine 152-cysteine 212. Asparagine 185 carries an N-linked (GlcNAc...) asparagine glycan. A helical transmembrane segment spans residues 239–259 (IVAAVLVTLILLGLLIFGIWF). Topologically, residues 260–300 (AYSRGYFERTKKGTAPGKKVIYSQPSARSEGEFKQTSSFLV) are cytoplasmic. 3 positions are modified to phosphoserine: serine 282, serine 285, and serine 288.

The protein belongs to the immunoglobulin superfamily. Interacts with the ninth PDZ domain of MPDZ. Interacts with the first PDZ domain of PARD3. The association between PARD3 and PARD6B probably disrupts this interaction. Interacts with ITGAL (via I-domain). Interacts with CD151. Post-translationally, N-glycosylated.

It localises to the cell junction. It is found in the tight junction. The protein localises to the cell membrane. Seems to play a role in epithelial tight junction formation. Appears early in primordial forms of cell junctions and recruits PARD3. The association of the PARD6-PARD3 complex may prevent the interaction of PARD3 with JAM1, thereby preventing tight junction assembly. Plays a role in regulating monocyte transmigration involved in integrity of epithelial barrier. Ligand for integrin alpha-L/beta-2 involved in memory T-cell and neutrophil transmigration. The chain is Junctional adhesion molecule A (F11r) from Rattus norvegicus (Rat).